A 485-amino-acid chain; its full sequence is Proline betaine:corrinoid methyltransferase (485 aa).

It belongs to the trimethylamine methyltransferase family. The proline betaine:THF methyl transfer system is composed of two methyltransferases, MtpB and MtqA, and the corrinoid protein MtqC.

The enzyme catalyses Co(I)-[quaternary-amine-specific corrinoid protein] + L-proline betaine + H(+) = methyl-Co(III)-[quaternary-amine-specific corrinoid protein] + N-methyl-L-proline. In terms of biological role, involved in the degradation of the quaternary amine L-proline betaine. Component of a corrinoid-dependent methyltransferase system that transfers a methyl group from L-proline betaine to tetrahydrofolate (THF), forming methyl-THF, a key intermediate in the Wood-Ljungdahl acetogenesis pathway. MtpB catalyzes the methylation of the corrinoid protein MtqC, using L-proline betaine as the methyl donor. Shows weak activity with some other quaternary amines, including carnitine, phosphocholine, glycine betaine or betonicine, but cannot methylate free cob(I)alamin. The polypeptide is Proline betaine:corrinoid methyltransferase (Eubacterium limosum).